Reading from the N-terminus, the 396-residue chain is L-lactate dehydrogenase (396 aa).

In terms of domain architecture, FMN hydroxy acid dehydrogenase spans 1–380; it reads MIISAASDYR…SGDSLVQELG (380 aa). Residue tyrosine 24 participates in substrate binding. FMN contacts are provided by serine 106 and glutamine 127. Position 129 (tyrosine 129) interacts with substrate. Residue threonine 155 coordinates FMN. Residue arginine 164 participates in substrate binding. Lysine 251 contributes to the FMN binding site. The Proton acceptor role is filled by histidine 275. Arginine 278 lines the substrate pocket. 306–330 is an FMN binding site; the sequence is DSGIRNGLDVVRMIALGADTVLLGR.

It belongs to the FMN-dependent alpha-hydroxy acid dehydrogenase family. The cofactor is FMN.

The protein localises to the cell inner membrane. It catalyses the reaction (S)-lactate + A = pyruvate + AH2. In terms of biological role, catalyzes the conversion of L-lactate to pyruvate. Is coupled to the respiratory chain. This is L-lactate dehydrogenase from Salmonella typhimurium (strain LT2 / SGSC1412 / ATCC 700720).